The chain runs to 99 residues: NADH dehydrogenase [ubiquinone] 1 alpha subcomplex subunit 2 (99 aa).

The residue at position 2 (Ala2) is an N-acetylalanine. Cys24 and Cys58 are disulfide-bonded. At Lys64 the chain carries N6-acetyllysine; alternate. Residue Lys64 is modified to N6-succinyllysine; alternate. Lys75 is modified (N6-acetyllysine).

This sequence belongs to the complex I NDUFA2 subunit family. As to quaternary structure, complex I is composed of 45 different subunits. Post-translationally, acetylation of Lys-64 and Lys-75 is observed in liver mitochondria from fasted mice but not from fed mice.

It localises to the mitochondrion inner membrane. Its function is as follows. Accessory subunit of the mitochondrial membrane respiratory chain NADH dehydrogenase (Complex I), that is believed not to be involved in catalysis. Complex I functions in the transfer of electrons from NADH to the respiratory chain. The immediate electron acceptor for the enzyme is believed to be ubiquinone. This Mus musculus (Mouse) protein is NADH dehydrogenase [ubiquinone] 1 alpha subcomplex subunit 2 (Ndufa2).